The following is an 89-amino-acid chain: Large ribosomal subunit protein bL27 (89 aa).

The tract at residues 1-26 (MATKKAGGSSKNGRDSAGRRLGLKKT) is disordered.

This sequence belongs to the bacterial ribosomal protein bL27 family.

This Orientia tsutsugamushi (strain Boryong) (Rickettsia tsutsugamushi) protein is Large ribosomal subunit protein bL27.